Consider the following 163-residue polypeptide: C-type lectin lectoxin-Lio1 (163 aa).

The N-terminal stretch at 1–21 (MERFIFAALLVVALSLSGTGA) is a signal peptide. 3 disulfide bridges follow: C25-C36, C53-C152, and C127-C144. The C-type lectin domain maps to 32-153 (SDGYCYKVFK…CRSKRYFICK (122 aa)). The Mannose-binding motif lies at 117–119 (EPN). E125 and D141 together coordinate Ca(2+).

This sequence belongs to the true venom lectin family. Expressed by the venom gland.

The protein resides in the secreted. In terms of biological role, mannose-binding lectin which recognizes specific carbohydrate structures and agglutinates a variety of animal cells by binding to cell-surface glycoproteins and glycolipids. May be a calcium-dependent lectin. This is C-type lectin lectoxin-Lio1 from Erythrolamprus poecilogyrus (Water snake).